A 279-amino-acid chain; its full sequence is Shikimate dehydrogenase (NADP(+)) (279 aa).

Shikimate contacts are provided by residues serine 21–serine 23 and threonine 68. The Proton acceptor role is filled by lysine 72. An NADP(+)-binding site is contributed by glutamate 84. Asparagine 93 and aspartate 109 together coordinate shikimate. Residues glycine 133–alanine 137, asparagine 157–lysine 162, and methionine 220 contribute to the NADP(+) site. Residue tyrosine 222 participates in shikimate binding. Glycine 244 provides a ligand contact to NADP(+).

Belongs to the shikimate dehydrogenase family. Homodimer.

It catalyses the reaction shikimate + NADP(+) = 3-dehydroshikimate + NADPH + H(+). It participates in metabolic intermediate biosynthesis; chorismate biosynthesis; chorismate from D-erythrose 4-phosphate and phosphoenolpyruvate: step 4/7. Its function is as follows. Involved in the biosynthesis of the chorismate, which leads to the biosynthesis of aromatic amino acids. Catalyzes the reversible NADPH linked reduction of 3-dehydroshikimate (DHSA) to yield shikimate (SA). This Shewanella halifaxensis (strain HAW-EB4) protein is Shikimate dehydrogenase (NADP(+)).